Reading from the N-terminus, the 176-residue chain is ATP synthase subunit b (176 aa).

A helical transmembrane segment spans residues 18 to 38 (GVEWGTVIVTVITFAILLALL).

It belongs to the ATPase B chain family. As to quaternary structure, F-type ATPases have 2 components, F(1) - the catalytic core - and F(0) - the membrane proton channel. F(1) has five subunits: alpha(3), beta(3), gamma(1), delta(1), epsilon(1). F(0) has three main subunits: a(1), b(2) and c(10-14). The alpha and beta chains form an alternating ring which encloses part of the gamma chain. F(1) is attached to F(0) by a central stalk formed by the gamma and epsilon chains, while a peripheral stalk is formed by the delta and b chains.

The protein localises to the cell membrane. In terms of biological role, f(1)F(0) ATP synthase produces ATP from ADP in the presence of a proton or sodium gradient. F-type ATPases consist of two structural domains, F(1) containing the extramembraneous catalytic core and F(0) containing the membrane proton channel, linked together by a central stalk and a peripheral stalk. During catalysis, ATP synthesis in the catalytic domain of F(1) is coupled via a rotary mechanism of the central stalk subunits to proton translocation. Functionally, component of the F(0) channel, it forms part of the peripheral stalk, linking F(1) to F(0). This Staphylococcus haemolyticus (strain JCSC1435) protein is ATP synthase subunit b.